Consider the following 461-residue polypeptide: ATP synthase subunit beta 2 (461 aa).

Position 151–158 (151–158) interacts with ATP; sequence GGAGVGKT.

The protein belongs to the ATPase alpha/beta chains family. F-type ATPases have 2 components, CF(1) - the catalytic core - and CF(0) - the membrane proton channel. CF(1) has five subunits: alpha(3), beta(3), gamma(1), delta(1), epsilon(1). CF(0) has three main subunits: a(1), b(2) and c(9-12). The alpha and beta chains form an alternating ring which encloses part of the gamma chain. CF(1) is attached to CF(0) by a central stalk formed by the gamma and epsilon chains, while a peripheral stalk is formed by the delta and b chains.

The protein resides in the cell inner membrane. It catalyses the reaction ATP + H2O + 4 H(+)(in) = ADP + phosphate + 5 H(+)(out). In terms of biological role, produces ATP from ADP in the presence of a proton gradient across the membrane. The catalytic sites are hosted primarily by the beta subunits. The sequence is that of ATP synthase subunit beta 2 from Photobacterium profundum (strain SS9).